Here is a 78-residue protein sequence, read N- to C-terminus: U5-ctenitoxin-Pk1a (78 aa).

7 cysteine pairs are disulfide-bonded: C6/C23, C13/C29, C20/C52, C22/C40, C31/C38, C58/C73, and C69/C77.

In terms of tissue distribution, expressed by the venom gland.

Its subcellular location is the secreted. Lethal neurotoxin. Causes spastic paralysis and death in mice in 4-6 minutes after intracerebroventricular injection at dose levels of 1.5 ug per mouse. The sequence is that of U5-ctenitoxin-Pk1a from Phoneutria keyserlingi (Brazilian wandering spider).